Consider the following 354-residue polypeptide: Uroporphyrinogen decarboxylase (354 aa).

Substrate-binding positions include 27–31, Asp77, Tyr154, Thr209, and His327; that span reads RQAGR.

The protein belongs to the uroporphyrinogen decarboxylase family. In terms of assembly, homodimer.

Its subcellular location is the cytoplasm. The catalysed reaction is uroporphyrinogen III + 4 H(+) = coproporphyrinogen III + 4 CO2. Its pathway is porphyrin-containing compound metabolism; protoporphyrin-IX biosynthesis; coproporphyrinogen-III from 5-aminolevulinate: step 4/4. Functionally, catalyzes the decarboxylation of four acetate groups of uroporphyrinogen-III to yield coproporphyrinogen-III. This is Uroporphyrinogen decarboxylase from Salmonella paratyphi A (strain ATCC 9150 / SARB42).